Reading from the N-terminus, the 565-residue chain is Sulfite reductase [NADPH] hemoprotein beta-component (565 aa).

Residues Cys-429, Cys-435, Cys-474, and Cys-478 each coordinate [4Fe-4S] cluster. A siroheme-binding site is contributed by Cys-478.

This sequence belongs to the nitrite and sulfite reductase 4Fe-4S domain family. As to quaternary structure, alpha(8)-beta(8). The alpha component is a flavoprotein, the beta component is a hemoprotein. Requires siroheme as cofactor. The cofactor is [4Fe-4S] cluster.

It carries out the reaction hydrogen sulfide + 3 NADP(+) + 3 H2O = sulfite + 3 NADPH + 4 H(+). It functions in the pathway sulfur metabolism; hydrogen sulfide biosynthesis; hydrogen sulfide from sulfite (NADPH route): step 1/1. In terms of biological role, component of the sulfite reductase complex that catalyzes the 6-electron reduction of sulfite to sulfide. This is one of several activities required for the biosynthesis of L-cysteine from sulfate. The protein is Sulfite reductase [NADPH] hemoprotein beta-component of Shewanella loihica (strain ATCC BAA-1088 / PV-4).